A 559-amino-acid chain; its full sequence is 2-isopropylmalate synthase (559 aa).

Residues 33 to 307 enclose the Pyruvate carboxyltransferase domain; it reads PIWCSSDLRD…DPQLDFSDID (275 aa). The Mg(2+) site is built by Asp42, His246, His248, and Asn282. Residues 439–559 are regulatory domain; that stretch reads ANTPYALVSH…SLSQQEAKAA (121 aa).

This sequence belongs to the alpha-IPM synthase/homocitrate synthase family. LeuA type 2 subfamily. In terms of assembly, homodimer. Mg(2+) is required as a cofactor.

The protein resides in the cytoplasm. It carries out the reaction 3-methyl-2-oxobutanoate + acetyl-CoA + H2O = (2S)-2-isopropylmalate + CoA + H(+). It functions in the pathway amino-acid biosynthesis; L-leucine biosynthesis; L-leucine from 3-methyl-2-oxobutanoate: step 1/4. Its function is as follows. Catalyzes the condensation of the acetyl group of acetyl-CoA with 3-methyl-2-oxobutanoate (2-ketoisovalerate) to form 3-carboxy-3-hydroxy-4-methylpentanoate (2-isopropylmalate). The polypeptide is 2-isopropylmalate synthase (Pseudomonas fluorescens (strain SBW25)).